A 1147-amino-acid chain; its full sequence is Nucleolar protein 8 (1147 aa).

Residues K8–E89 form the RRM domain. Residue K225 forms a Glycyl lysine isopeptide (Lys-Gly) (interchain with G-Cter in SUMO2) linkage. Phosphoserine is present on residues S300 and S306. A Glycyl lysine isopeptide (Lys-Gly) (interchain with G-Cter in SUMO2) cross-link involves residue K316. Y362 bears the Phosphotyrosine mark. 2 positions are modified to phosphoserine: S364 and S365. The residue at position 367 (T367) is a Phosphothreonine. The segment at K379–K401 is disordered. Residues S383–Q400 show a composition bias toward polar residues. S416 carries the phosphoserine modification. Disordered regions lie at residues K427 to K452, A472 to N511, M592 to A659, K686 to Q741, A766 to E888, K932 to L963, and S986 to C1017. Residues D441–E450 show a composition bias toward acidic residues. Composition is skewed to polar residues over residues M592–Q610 and T629–P650. Basic and acidic residues-rich tracts occupy residues S700–Q714 and A732–Q741. S704 is modified (phosphoserine). T777 carries the phosphothreonine modification. 2 positions are modified to phosphoserine: S783 and S787. Residues C799–V809 show a composition bias toward basic and acidic residues. Residues S819, S820, S825, S827, and S872 each carry the phosphoserine modification. A compositionally biased stretch (basic and acidic residues) spans S857–K883. Coiled coils occupy residues L868 to N898 and I937 to L963. Residues D994–N1011 are compositionally biased toward basic and acidic residues. A Glycyl lysine isopeptide (Lys-Gly) (interchain with G-Cter in SUMO2) cross-link involves residue K1038. Residues P1055–P1086 are disordered. Phosphoserine is present on residues S1063, S1064, S1065, and S1080.

As to quaternary structure, interacts with the GTP form of RRAGA, RRAGC and RRAGD. Interacts with NIP7. Interacts with DDX18; the interaction is RNA-dependent. Interacts with DDX47; the interaction is RNA-dependent. Post-translationally, phosphorylated.

The protein localises to the nucleus. The protein resides in the nucleolus. Its function is as follows. Plays an essential role in the survival of diffuse-type gastric cancer cells. Acts as a nucleolar anchoring protein for DDX47. May be involved in regulation of gene expression at the post-transcriptional level or in ribosome biogenesis in cancer cells. The sequence is that of Nucleolar protein 8 from Mus musculus (Mouse).